Consider the following 182-residue polypeptide: Capsid protein (182 aa).

The tract at residues Met-1–Pro-25 is disordered.

Its subcellular location is the virion. In terms of biological role, capsid protein self-assembles to form a quasi-spherical capsid, about 26 nm, or bacilliform. The chain is Capsid protein from Olive latent virus 2 (isolate Italy) (OLV-2).